We begin with the raw amino-acid sequence, 399 residues long: Nicotinate phosphoribosyltransferase (399 aa).

H221 is subject to Phosphohistidine; by autocatalysis.

Belongs to the NAPRTase family. Transiently phosphorylated on a His residue during the reaction cycle. Phosphorylation strongly increases the affinity for substrates and increases the rate of nicotinate D-ribonucleotide production. Dephosphorylation regenerates the low-affinity form of the enzyme, leading to product release.

It carries out the reaction nicotinate + 5-phospho-alpha-D-ribose 1-diphosphate + ATP + H2O = nicotinate beta-D-ribonucleotide + ADP + phosphate + diphosphate. It participates in cofactor biosynthesis; NAD(+) biosynthesis; nicotinate D-ribonucleotide from nicotinate: step 1/1. In terms of biological role, catalyzes the synthesis of beta-nicotinate D-ribonucleotide from nicotinate and 5-phospho-D-ribose 1-phosphate at the expense of ATP. This is Nicotinate phosphoribosyltransferase from Buchnera aphidicola subsp. Acyrthosiphon pisum (strain 5A).